A 239-amino-acid polypeptide reads, in one-letter code: Transcription factor MYB10 (239 aa).

HTH myb-type domains are found at residues 11–63 and 64–118; these read KSQV…INYL and RPGL…KKRL. 2 DNA-binding regions (H-T-H motif) span residues 39-63 and 91-114; these read WRSL…INYL and WSKI…NTHL.

As to expression, expressed in cauline leaves and siliques.

The protein localises to the nucleus. Involved in metal ions homeostasis, including iron ions (Fe) acquisition, via the regulation of NAS4 and NAS2 genes expression. Necessary for plant survival in alkaline soil where iron availability is greatly restricted. Triggers tolerance to nickel (Ni) and zinc (Zn) ions. The polypeptide is Transcription factor MYB10 (Arabidopsis thaliana (Mouse-ear cress)).